The following is a 627-amino-acid chain: Phosphomethylpyrimidine synthase (627 aa).

The segment at 1–21 (MSVQSNKNLSESAQVDQQSIQ) is disordered. Residues asparagine 231, methionine 260, tyrosine 289, histidine 325, 345-347 (SRG), 386-389 (DGLR), and glutamate 425 contribute to the substrate site. Histidine 429 serves as a coordination point for Zn(2+). Residue tyrosine 452 participates in substrate binding. Position 493 (histidine 493) interacts with Zn(2+). [4Fe-4S] cluster-binding residues include cysteine 573, cysteine 576, and cysteine 581.

It belongs to the ThiC family. Homodimer. [4Fe-4S] cluster is required as a cofactor.

The catalysed reaction is 5-amino-1-(5-phospho-beta-D-ribosyl)imidazole + S-adenosyl-L-methionine = 4-amino-2-methyl-5-(phosphooxymethyl)pyrimidine + CO + 5'-deoxyadenosine + formate + L-methionine + 3 H(+). Its pathway is cofactor biosynthesis; thiamine diphosphate biosynthesis. Functionally, catalyzes the synthesis of the hydroxymethylpyrimidine phosphate (HMP-P) moiety of thiamine from aminoimidazole ribotide (AIR) in a radical S-adenosyl-L-methionine (SAM)-dependent reaction. This is Phosphomethylpyrimidine synthase from Stutzerimonas stutzeri (strain A1501) (Pseudomonas stutzeri).